Reading from the N-terminus, the 38-residue chain is Large ribosomal subunit protein bL36 (38 aa).

This sequence belongs to the bacterial ribosomal protein bL36 family.

This Buchnera aphidicola subsp. Cinara cedri (strain Cc) protein is Large ribosomal subunit protein bL36.